A 588-amino-acid chain; its full sequence is DELLA protein GAI (588 aa).

Residues 1 to 15 (MKRDRDRDREREKRA) are compositionally biased toward basic and acidic residues. The segment at 1–38 (MKRDRDRDREREKRAFSNGAVSSGKSKIWEEDEEEKPD) is disordered. The short motif at 42–46 (DELLA) is the DELLA motif element. Residues 152–177 (GAVFNSDSNKRHRSTTSSFSTTSSSM) are disordered. The span at 166 to 177 (TTSSFSTTSSSM) shows a compositional bias: low complexity. The region spanning 190–574 (VDSQETGVRL…RPLIATSAWK (385 aa)) is the GRAS domain. The interval 197-251 (VRLVHTLMACAEAVQQENLTLADQLVRHIGILAVSQSGAMRKVATYFAEALARRI) is leucine repeat I (LRI). Positions 269–334 (QMHFYETCPY…GGPPAFRLTG (66 aa)) are VHIID. The VHIID motif lies at 300–304 (VHVID). The segment at 348–380 (QVGWKLAQLAETIGVEFEFRGFVANSLADLDAT) is leucine repeat II (LRII). Positions 392-495 (VAINSVFELH…EVYLGRQICN (104 aa)) are PFYRE. The LXXLL motif motif lies at 400-404 (LHRLL). Residues 498-574 (ACEGSDRVER…RPLIATSAWK (77 aa)) form an SAW region.

Belongs to the GRAS family. DELLA subfamily. In terms of processing, phosphorylated. Post-translationally, ubiquitinated. Upon GA application it is ubiquitinated, leading to its subsequent degradation. As to expression, expressed in both vegetative and reproductive tissues.

It localises to the nucleus. In terms of biological role, probable transcriptional regulator that acts as a repressor of the gibberellin (GA) signaling pathway. Probably acts by participating in large multiprotein complexes that repress transcription of GA-inducible genes. Upon GA application, it is degraded by the proteasome, allowing the GA signaling pathway. Its degradation is not essential for germination. This Solanum lycopersicum (Tomato) protein is DELLA protein GAI (GAI).